Here is a 442-residue protein sequence, read N- to C-terminus: UDP-N-acetylmuramoylalanine--D-glutamate ligase (442 aa).

It belongs to the MurCDEF family.

The protein localises to the cytoplasm. The catalysed reaction is UDP-N-acetyl-alpha-D-muramoyl-L-alanine + D-glutamate + ATP = UDP-N-acetyl-alpha-D-muramoyl-L-alanyl-D-glutamate + ADP + phosphate + H(+). It functions in the pathway cell wall biogenesis; peptidoglycan biosynthesis. In terms of biological role, cell wall formation. Catalyzes the addition of glutamate to the nucleotide precursor UDP-N-acetylmuramoyl-L-alanine (UMA). The chain is UDP-N-acetylmuramoylalanine--D-glutamate ligase from Buchnera aphidicola subsp. Baizongia pistaciae (strain Bp).